Consider the following 323-residue polypeptide: Olfactory receptor 1E2 (323 aa).

At 1–25 (MMGQNQTSISDFLLLGLPIQPEQQN) the chain is on the extracellular side. N-linked (GlcNAc...) asparagine glycosylation is present at Asn-5. The helical transmembrane segment at 26 to 49 (LCYALFLAMYLTTLLGNLLIIVLI) threads the bilayer. Residues 50-57 (RLDSHLHT) are Cytoplasmic-facing. The chain crosses the membrane as a helical span at residues 58–79 (PVYLFLSNLSFSDLCFSSVTMP). The Extracellular portion of the chain corresponds to 80-100 (KLLQNMQNQDPSIPYADCLTQ). A disulfide bridge connects residues Cys-97 and Cys-198. Residues 101-120 (MYFFLYFSDLESFLLVAMAY) traverse the membrane as a helical segment. The Cytoplasmic segment spans residues 121–148 (DRYVAICFPMHYTAICFLLHYTAIMSPM). The chain crosses the membrane as a helical span at residues 149–167 (LCLSVVALSWVLTTFHAML). Residues 168–205 (HTLLMARLCFCADNVIPHFFCDMSALLKLACSDTRVNE) lie on the Extracellular side of the membrane. The chain crosses the membrane as a helical span at residues 206 to 228 (WVIFIMGGLILVIPFLLILGSYA). Topologically, residues 229-245 (RIVSSILKVPSSKGICK) are cytoplasmic. A helical membrane pass occupies residues 246–269 (AFSTCGSHLSVVSLFYGTVIGLYL). At 270-281 (CPSANSSTLKDT) the chain is on the extracellular side. An N-linked (GlcNAc...) asparagine glycan is attached at Asn-274. Residues 282–301 (VMAMMYTVVTPMLTPFIYSL) form a helical membrane-spanning segment. At 302-323 (RNRDMKGALERVICKRKNPFLL) the chain is on the cytoplasmic side.

It belongs to the G-protein coupled receptor 1 family.

The protein resides in the cell membrane. In terms of biological role, odorant receptor. In Homo sapiens (Human), this protein is Olfactory receptor 1E2 (OR1E2).